A 148-amino-acid chain; its full sequence is Large ribosomal subunit protein bL9 (148 aa).

This sequence belongs to the bacterial ribosomal protein bL9 family.

Its function is as follows. Binds to the 23S rRNA. The protein is Large ribosomal subunit protein bL9 of Solibacter usitatus (strain Ellin6076).